Reading from the N-terminus, the 299-residue chain is Protoheme IX farnesyltransferase (299 aa).

A run of 9 helical transmembrane segments spans residues 27–47, 53–73, 97–117, 121–141, 149–169, 175–195, 222–242, 244–264, and 273–293; these read VVALMLLTSVVGMSLAPHEHF, LIALVGIALMAGSAAAFNHLI, FNVLLFALLIGSLGFLSLMLW, LTAYLTFASLLGYAVVYTLYL, IVIAGIAGAMPPLLGWTSITG, AWLLVMIIFIWTPPHFWALAI, ILLYAILLALVCMLPVLVGMA, YLYLFSALVLNVCFVRYAIKL, and AIEMFRFSIYFLLLLFCALLL.

Belongs to the UbiA prenyltransferase family. Protoheme IX farnesyltransferase subfamily.

The protein resides in the cell inner membrane. The catalysed reaction is heme b + (2E,6E)-farnesyl diphosphate + H2O = Fe(II)-heme o + diphosphate. The protein operates within porphyrin-containing compound metabolism; heme O biosynthesis; heme O from protoheme: step 1/1. Converts heme B (protoheme IX) to heme O by substitution of the vinyl group on carbon 2 of heme B porphyrin ring with a hydroxyethyl farnesyl side group. In Vibrio vulnificus (strain YJ016), this protein is Protoheme IX farnesyltransferase.